The primary structure comprises 1234 residues: DNA-directed RNA polymerase subunit beta (1234 aa).

A disordered region spans residues 1169-1234 (ESVDEDADEL…LDLDDFGDEH (66 aa)). Acidic residues-rich tracts occupy residues 1171 to 1180 (VDEDADELEV) and 1191 to 1234 (EKEE…GDEH).

Belongs to the RNA polymerase beta chain family. The RNAP catalytic core consists of 2 alpha, 1 beta, 1 beta' and 1 omega subunit. When a sigma factor is associated with the core the holoenzyme is formed, which can initiate transcription.

The catalysed reaction is RNA(n) + a ribonucleoside 5'-triphosphate = RNA(n+1) + diphosphate. In terms of biological role, DNA-dependent RNA polymerase catalyzes the transcription of DNA into RNA using the four ribonucleoside triphosphates as substrates. This Clostridium botulinum (strain Langeland / NCTC 10281 / Type F) protein is DNA-directed RNA polymerase subunit beta.